The primary structure comprises 263 residues: Coiled-coil domain-containing protein 172 (263 aa).

Residues 13 to 191 (TEHQAEESRR…LKVLKDEETE (179 aa)) are a coiled coil.

The protein belongs to the CCDC172 family. In terms of assembly, may interact with TEKT2. In terms of tissue distribution, detected in spermatozoa (at protein level). Predominantly expressed in testis and in spermatozoa from the caput and corpus epididymis.

It localises to the cytoplasm. The protein resides in the cell projection. The protein localises to the cilium. The sequence is that of Coiled-coil domain-containing protein 172 (Ccdc172) from Rattus norvegicus (Rat).